The following is a 1085-amino-acid chain: Tudor domain-containing protein 7B (1085 aa).

Positions 3–76 constitute an HTH OST-type 1 domain; the sequence is DEELVKKMVR…SGEVMCHATT (74 aa). 3 disordered regions span residues 112–183, 200–228, and 297–341; these read APLV…PEKR, RNPQ…SAPY, and PAKE…KALS. The segment covering 203–216 has biased composition (polar residues); it reads QHINVPSNLNENTT. The HTH OST-type 2 domain occupies 229 to 299; the sequence is SPKLVQSRLQ…PQELLLYPAK (71 aa). Positions 322–335 are enriched in polar residues; it reads TQRPSLTAKSNTPE. The HTH OST-type 3 domain occupies 340–410; the sequence is LSPDLKQKLG…PKRAILYAKV (71 aa). Tudor domains lie at 496-554 and 686-743; these read SPSP…FYRL and RPFC…LLRD. Polar residues predominate over residues 843–853; it reads NVPTATQTSSL. A disordered region spans residues 843–888; it reads NVPTATQTSSLKTDRGDKALHTPKKTSPPLGSKSTPAGSPPERLSL.

It localises to the cytoplasm. Functionally, component of specific cytoplasmic RNA granules involved in post-transcriptional regulation of specific genes: probably acts by binding to specific mRNAs and regulating their translation. Probably required during spermatogenesis. The chain is Tudor domain-containing protein 7B (tdrd7b) from Danio rerio (Zebrafish).